A 404-amino-acid chain; its full sequence is Phosphopentomutase (404 aa).

Mn(2+)-binding residues include Asp10, Asp297, His302, Asp338, His339, and His350.

It belongs to the phosphopentomutase family. Mn(2+) serves as cofactor.

The protein localises to the cytoplasm. The catalysed reaction is 2-deoxy-alpha-D-ribose 1-phosphate = 2-deoxy-D-ribose 5-phosphate. It catalyses the reaction alpha-D-ribose 1-phosphate = D-ribose 5-phosphate. It participates in carbohydrate degradation; 2-deoxy-D-ribose 1-phosphate degradation; D-glyceraldehyde 3-phosphate and acetaldehyde from 2-deoxy-alpha-D-ribose 1-phosphate: step 1/2. In terms of biological role, isomerase that catalyzes the conversion of deoxy-ribose 1-phosphate (dRib-1-P) and ribose 1-phosphate (Rib-1-P) to deoxy-ribose 5-phosphate (dRib-5-P) and ribose 5-phosphate (Rib-5-P), respectively. This Colwellia psychrerythraea (strain 34H / ATCC BAA-681) (Vibrio psychroerythus) protein is Phosphopentomutase.